The following is a 354-amino-acid chain: Guanine nucleotide-binding protein alpha-16 subunit (354 aa).

Residue G2 is the site of N-myristoyl glycine attachment. A lipid anchor (S-palmitoyl cysteine) is attached at C3. The 324-residue stretch at 31 to 354 folds into the G-alpha domain; sequence KTVKLLLLGA…RDNLRTCGLY (324 aa). The tract at residues 34–47 is G1 motif; that stretch reads KLLLLGAGESGKST. Residues 39 to 46, 174 to 180, 199 to 203, 268 to 271, and A326 contribute to the GTP site; these read GAGESGKS, LRTRIKT, DVGGQ, and NKKD. Positions 46 and 180 each coordinate Mg(2+). The tract at residues 172–180 is G2 motif; sequence DVLRTRIKT. Positions 195-204 are G3 motif; the sequence is FVVFDVGGQR. The G4 motif stretch occupies residues 264 to 271; that stretch reads ILFLNKKD. The G5 motif stretch occupies residues 324–329; it reads TCATDT.

This sequence belongs to the G-alpha family. As to quaternary structure, g proteins are composed of 3 units; alpha, beta and gamma. The alpha chain contains the guanine nucleotide binding site.

In terms of biological role, guanine nucleotide-binding proteins (G proteins) are involved as modulators or transducers in various transmembrane signaling systems. In the 1-cell embryo, probably together with goa-1, controls nuclear rotation and spindle elongation during mitosis. During the first embryonic cell divisons, plays a role in gpr-1/2 cortical localization and in the proper orientation of EMS blastomere mitotic spindle. The sequence is that of Guanine nucleotide-binding protein alpha-16 subunit (gpa-16) from Caenorhabditis briggsae.